Consider the following 194-residue polypeptide: Putative L,D-transpeptidase YciB (194 aa).

An N-terminal signal peptide occupies residues 1 to 19; that stretch reads MKLSLFIIAVLMPVILLSA. A lipid anchor (N-palmitoyl cysteine) is attached at cysteine 20. The S-diacylglycerol cysteine moiety is linked to residue cysteine 20. A L,D-TPase catalytic domain is found at 68-194; the sequence is VWIDVNVKEQ…IPEHTKVVIS (127 aa). Histidine 144 (proton donor/acceptor) is an active-site residue. Cysteine 170 (nucleophile) is an active-site residue.

The protein belongs to the YkuD family.

It is found in the cell membrane. Its pathway is cell wall biogenesis; peptidoglycan biosynthesis. The polypeptide is Putative L,D-transpeptidase YciB (yciB) (Bacillus subtilis (strain 168)).